The primary structure comprises 182 residues: Peptide methionine sulfoxide reductase MsrA (182 aa).

Residue Cys-13 is part of the active site.

It belongs to the MsrA Met sulfoxide reductase family.

The enzyme catalyses L-methionyl-[protein] + [thioredoxin]-disulfide + H2O = L-methionyl-(S)-S-oxide-[protein] + [thioredoxin]-dithiol. It catalyses the reaction [thioredoxin]-disulfide + L-methionine + H2O = L-methionine (S)-S-oxide + [thioredoxin]-dithiol. In terms of biological role, has an important function as a repair enzyme for proteins that have been inactivated by oxidation. Catalyzes the reversible oxidation-reduction of methionine sulfoxide in proteins to methionine. This chain is Peptide methionine sulfoxide reductase MsrA, found in Mycobacterium bovis (strain ATCC BAA-935 / AF2122/97).